Here is a 339-residue protein sequence, read N- to C-terminus: Nicotinate-nucleotide--dimethylbenzimidazole phosphoribosyltransferase (339 aa).

The Proton acceptor role is filled by E306.

This sequence belongs to the CobT family.

The enzyme catalyses 5,6-dimethylbenzimidazole + nicotinate beta-D-ribonucleotide = alpha-ribazole 5'-phosphate + nicotinate + H(+). The protein operates within nucleoside biosynthesis; alpha-ribazole biosynthesis; alpha-ribazole from 5,6-dimethylbenzimidazole: step 1/2. Its function is as follows. Catalyzes the synthesis of alpha-ribazole-5'-phosphate from nicotinate mononucleotide (NAMN) and 5,6-dimethylbenzimidazole (DMB). This Brucella melitensis biotype 1 (strain ATCC 23456 / CCUG 17765 / NCTC 10094 / 16M) protein is Nicotinate-nucleotide--dimethylbenzimidazole phosphoribosyltransferase.